The primary structure comprises 66 residues: Prokaryotic ubiquitin-like protein UBact (66 aa).

The tract at residues 1-66 is disordered; sequence MNMRYTLMPE…AERYRQRTGE (66 aa). Over residues 30-66 the composition is skewed to basic and acidic residues; the sequence is GGPRRPETGSPDKDNLLKRMRKVDPKQAERYRQRTGE. E66 is covalently cross-linked (Isoglutamyl lysine isopeptide (Glu-Lys) (interchain with K-? in acceptor proteins)).

The protein belongs to the ubiquitin-like protein UBact family.

In terms of biological role, may function as a protein modifier covalently attached to lysine residues of substrate proteins. This may serve to target the modified proteins for degradation by proteasomes. In Nitrospira moscoviensis, this protein is Prokaryotic ubiquitin-like protein UBact.